A 191-amino-acid polypeptide reads, in one-letter code: MKKQLFSALIGASLFAPMAVSAADYVIDTEGAHASITFKVNHLGYSYVVGRFNDFSGDFSFDAAKPTAMKVNVTVNTVSVDSNHAERDKHIRGEDFLNTGKFAKATFASTSVEDKGNGDLVINGNLTLNGVTKPLAIQAHAVGEGQDPWGGYRAGFTGKTTFAMKDFGIKIDLGPTSSHVELDLVVEGVRK.

The N-terminal stretch at 1 to 22 (MKKQLFSALIGASLFAPMAVSA) is a signal peptide.

This sequence belongs to the UPF0312 family. Type 1 subfamily.

It is found in the periplasm. The chain is UPF0312 protein SO_3370 from Shewanella oneidensis (strain ATCC 700550 / JCM 31522 / CIP 106686 / LMG 19005 / NCIMB 14063 / MR-1).